The following is a 447-amino-acid chain: N-succinylarginine dihydrolase (447 aa).

Substrate is bound by residues 19–28 (AGLSFGNEAS), Asn110, and 137–138 (HR). Residue Glu174 is part of the active site. Substrate is bound at residue Arg212. Residue His248 is part of the active site. Residues Asp250 and Asn359 each coordinate substrate. Residue Cys365 is the Nucleophile of the active site.

Belongs to the succinylarginine dihydrolase family. As to quaternary structure, homodimer.

The enzyme catalyses N(2)-succinyl-L-arginine + 2 H2O + 2 H(+) = N(2)-succinyl-L-ornithine + 2 NH4(+) + CO2. It functions in the pathway amino-acid degradation; L-arginine degradation via AST pathway; L-glutamate and succinate from L-arginine: step 2/5. Functionally, catalyzes the hydrolysis of N(2)-succinylarginine into N(2)-succinylornithine, ammonia and CO(2). In Salmonella paratyphi A (strain ATCC 9150 / SARB42), this protein is N-succinylarginine dihydrolase.